Consider the following 344-residue polypeptide: Protein RecA (344 aa).

65-72 (GPESSGKT) provides a ligand contact to ATP.

It belongs to the RecA family.

It is found in the cytoplasm. Can catalyze the hydrolysis of ATP in the presence of single-stranded DNA, the ATP-dependent uptake of single-stranded DNA by duplex DNA, and the ATP-dependent hybridization of homologous single-stranded DNAs. It interacts with LexA causing its activation and leading to its autocatalytic cleavage. The protein is Protein RecA of Xanthomonas oryzae pv. oryzae (strain PXO99A).